Here is a 200-residue protein sequence, read N- to C-terminus: Holliday junction branch migration complex subunit RuvA (200 aa).

The segment at 1–63 (MIASVRGVVT…EDSLTLYGFA (63 aa)) is domain I. The interval 64–142 (DDNAKALFEL…PVPVGGDGAA (79 aa)) is domain II. Positions 143–151 (GVTTGAWPE) are flexible linker. Residues 151 to 200 (EQVRQALVGLGWTAGQAEQAVAAVAETVDGEVPPVPVLLRQAIRLLGRTR) are domain III.

The protein belongs to the RuvA family. Homotetramer. Forms an RuvA(8)-RuvB(12)-Holliday junction (HJ) complex. HJ DNA is sandwiched between 2 RuvA tetramers; dsDNA enters through RuvA and exits via RuvB. An RuvB hexamer assembles on each DNA strand where it exits the tetramer. Each RuvB hexamer is contacted by two RuvA subunits (via domain III) on 2 adjacent RuvB subunits; this complex drives branch migration. In the full resolvosome a probable DNA-RuvA(4)-RuvB(12)-RuvC(2) complex forms which resolves the HJ.

It is found in the cytoplasm. Functionally, the RuvA-RuvB-RuvC complex processes Holliday junction (HJ) DNA during genetic recombination and DNA repair, while the RuvA-RuvB complex plays an important role in the rescue of blocked DNA replication forks via replication fork reversal (RFR). RuvA specifically binds to HJ cruciform DNA, conferring on it an open structure. The RuvB hexamer acts as an ATP-dependent pump, pulling dsDNA into and through the RuvAB complex. HJ branch migration allows RuvC to scan DNA until it finds its consensus sequence, where it cleaves and resolves the cruciform DNA. The chain is Holliday junction branch migration complex subunit RuvA from Salinispora arenicola (strain CNS-205).